We begin with the raw amino-acid sequence, 329 residues long: Major outer membrane protein P.IB (329 aa).

Residues 1–19 (MKKSLIALTLAALPVAAMA) form the signal peptide.

It belongs to the Gram-negative porin family. Homotrimer.

The protein resides in the cell outer membrane. Its function is as follows. Serves as a slightly cation selective porin. The sequence is that of Major outer membrane protein P.IB (porB) from Neisseria meningitidis serogroup A / serotype 4A (strain DSM 15465 / Z2491).